Here is a 570-residue protein sequence, read N- to C-terminus: Nucleoprotein (570 aa).

The interval 54-241 is binding site for the cap structure m7GTP; that stretch reads MRKQKRDDGD…IDTKKSSLNI (188 aa). The Mn(2+) site is built by aspartate 390 and glutamate 392. Residues glutamate 400, cysteine 507, histidine 510, and cysteine 530 each contribute to the Zn(2+) site. Residue aspartate 534 participates in Mn(2+) binding.

It belongs to the arenaviridae nucleocapsid protein family. In terms of assembly, homomultimerizes to form the nucleocapsid. Binds to viral genomic RNA. Interacts with glycoprotein G2. Interacts with protein Z; this interaction probably directs the encapsidated genome to budding sites. Interacts with protein L; this interaction does not interfere with Z-L interaction. Interacts with host IKBKE (via Protein kinase domain); the interaction inhibits IKBKE kinase activity.

The protein resides in the virion. Its subcellular location is the host cytoplasm. In terms of biological role, encapsidates the genome, protecting it from nucleases. The encapsidated genomic RNA is termed the nucleocapsid (NC). Serves as template for viral transcription and replication. The increased presence of protein N in host cell does not seem to trigger the switch from transcription to replication as observed in other negative strain RNA viruses. Through the interaction with host IKBKE, strongly inhibits the phosphorylation and nuclear translocation of host IRF3, a protein involved in interferon activation pathway, leading to the inhibition of interferon-beta and IRF3-dependent promoters activation. Also encodes a functional 3'-5' exoribonuclease that degrades preferentially dsRNA substrates and thereby participates in the suppression of interferon induction. The sequence is that of Nucleoprotein from Homo sapiens (Human).